We begin with the raw amino-acid sequence, 124 residues long: MAAELHVELVAADRSVWSGEATLVVARTTSGDIGVMPGHQPLLGVLESGPVTIRTSEGGTVIAAVHGGFISFADDKLSLLAEIAELADEIDVERAERALELAKSDADAAAQRRADVRLRAVAVR.

The protein belongs to the ATPase epsilon chain family. F-type ATPases have 2 components, CF(1) - the catalytic core - and CF(0) - the membrane proton channel. CF(1) has five subunits: alpha(3), beta(3), gamma(1), delta(1), epsilon(1). CF(0) has three main subunits: a, b and c.

It localises to the cell membrane. Functionally, produces ATP from ADP in the presence of a proton gradient across the membrane. This Streptomyces griseus subsp. griseus (strain JCM 4626 / CBS 651.72 / NBRC 13350 / KCC S-0626 / ISP 5235) protein is ATP synthase epsilon chain.